A 723-amino-acid polypeptide reads, in one-letter code: Threonine--tRNA ligase, mitochondrial (723 aa).

S57 carries the phosphoserine modification. Positions 64-126 constitute a TGS domain; sequence RAIKISLPEG…ETDCHLRFLT (63 aa).

The protein belongs to the class-II aminoacyl-tRNA synthetase family. In terms of assembly, homodimer.

It localises to the mitochondrion matrix. It catalyses the reaction tRNA(Thr) + L-threonine + ATP = L-threonyl-tRNA(Thr) + AMP + diphosphate + H(+). Catalyzes the attachment of threonine to tRNA(Thr) in a two-step reaction: threonine is first activated by ATP to form Thr-AMP and then transferred to the acceptor end of tRNA(Thr). Also edits incorrectly charged tRNA(Thr) via its editing domain. The polypeptide is Threonine--tRNA ligase, mitochondrial (Tars2) (Mus musculus (Mouse)).